The chain runs to 333 residues: N-acetyl-gamma-glutamyl-phosphate reductase (333 aa).

Residue C145 is part of the active site.

This sequence belongs to the NAGSA dehydrogenase family. Type 1 subfamily.

The protein resides in the cytoplasm. It carries out the reaction N-acetyl-L-glutamate 5-semialdehyde + phosphate + NADP(+) = N-acetyl-L-glutamyl 5-phosphate + NADPH + H(+). It functions in the pathway amino-acid biosynthesis; L-arginine biosynthesis; N(2)-acetyl-L-ornithine from L-glutamate: step 3/4. Catalyzes the NADPH-dependent reduction of N-acetyl-5-glutamyl phosphate to yield N-acetyl-L-glutamate 5-semialdehyde. This is N-acetyl-gamma-glutamyl-phosphate reductase from Salinispora tropica (strain ATCC BAA-916 / DSM 44818 / JCM 13857 / NBRC 105044 / CNB-440).